Here is a 341-residue protein sequence, read N- to C-terminus: N-acetyl-gamma-glutamyl-phosphate reductase (341 aa).

The active site involves C163.

This sequence belongs to the NAGSA dehydrogenase family. Type 1 subfamily.

It localises to the cytoplasm. It catalyses the reaction N-acetyl-L-glutamate 5-semialdehyde + phosphate + NADP(+) = N-acetyl-L-glutamyl 5-phosphate + NADPH + H(+). It functions in the pathway amino-acid biosynthesis; L-arginine biosynthesis; N(2)-acetyl-L-ornithine from L-glutamate: step 3/4. Catalyzes the NADPH-dependent reduction of N-acetyl-5-glutamyl phosphate to yield N-acetyl-L-glutamate 5-semialdehyde. The chain is N-acetyl-gamma-glutamyl-phosphate reductase from Idiomarina loihiensis (strain ATCC BAA-735 / DSM 15497 / L2-TR).